Consider the following 511-residue polypeptide: MVGHSAQHRSKSSLVSHLLILLIFITIIIEMCLYNKIFKNQRSDDIRDNFNNGGHRVPSNVQNHGTHIRDEAFISGVYYSNWSPYKPRFHFPHDINLKQVSHIYYAFFKINSRTGGIENTDSWSDLEMNLYKSLAIKNSELIKESSNNSVQNILPLGCIGELFYLKNTCSDKKFKVIMSIGGWSDSENFKIIIKDDKLLQNFVDSSVETMFRLGFDGIDLDWEFPGNNESEPRGYLKLVRMLRLKLNSLESQIFGKRTEDHFQLSIAAPAFKDKLFYLPITEIDQYVDYWNMMTYDYYGSWSETTGYHSNLFSETELNGNFAMHYMIDRFGVNSRKLVLGMAAYGRSFHIKDNKFEPFNQNTVLINKIFKGVGKPTKEIDKADGKEGIWPYKNLPKIGTIEQYDPKYVSAYCFDEKNSIFISYDNTKSVKTKAEYVTHNNLGGGFWWESCGEAYANESRSLINAFNEGLHFNVSSKPSIFQDVRVKKYYLNKYGDGGFLSPYLKHLDSRKQ.

The signal sequence occupies residues 1 to 34; that stretch reads MVGHSAQHRSKSSLVSHLLILLIFITIIIEMCLY. One can recognise a GH18 domain in the interval 73 to 472; it reads FISGVYYSNW…NAFNEGLHFN (400 aa). An N-linked (GlcNAc...) asparagine glycan is attached at asparagine 147. Catalysis depends on glutamate 223, which acts as the Proton donor. Residues asparagine 228, asparagine 456, and asparagine 472 are each glycosylated (N-linked (GlcNAc...) asparagine).

The protein belongs to the glycosyl hydrolase 18 family. Chitinase class III subfamily.

It localises to the secreted. It carries out the reaction Random endo-hydrolysis of N-acetyl-beta-D-glucosaminide (1-&gt;4)-beta-linkages in chitin and chitodextrins.. This Saccharomyces cerevisiae (strain ATCC 204508 / S288c) (Baker's yeast) protein is Sporulation-specific chitinase 2 (CTS2).